The following is a 304-amino-acid chain: MIRKTIILLLFIIVSITWGTTFIAIRIASDTIPPLCITGMRFLLASFFLIFLCFYTKTPLLFPSNKKIFQLIICIFYFSLPFLLILYGGRYVNSTIASVIFAIMPIIVLFLSFIFFNKKLYFFQFIGLVLAIIFLSIILFKEIELGDEKTIKGVIALLLAMTSHAIIYLYSKEKYSNISILTFNALPSLLSGLFFLVISNILEHPKFDNFSNISILATFYLSYFSGVFGILSYFYLQKKVSAFQASTIFFIFPIINLMLEEFVWGNSIGIDQLQLIVFLMSSILITIFPFDLKNFMRFIKNFKK.

10 helical membrane-spanning segments follow: residues 5 to 25 (TIIL…FIAI), 42 to 62 (FLLA…PLLF), 68 to 88 (IFQL…ILYG), 96 to 116 (IASV…FIFF), 120 to 140 (LYFF…IILF), 150 to 170 (TIKG…IYLY), 178 to 198 (ISIL…FLVI), 215 to 235 (ILAT…SYFY), 245 to 265 (ASTI…FVWG), and 268 to 288 (IGID…ITIF). 2 consecutive EamA domains span residues 16 to 140 (ITWG…IILF) and 162 to 288 (TSHA…ITIF).

The protein belongs to the EamA transporter family.

It is found in the cell membrane. This is an uncharacterized protein from Buchnera aphidicola subsp. Schlechtendalia chinensis.